The sequence spans 575 residues: Isocitrate dehydrogenase kinase/phosphatase (575 aa).

ATP-binding positions include 315–321 (APGVKGM) and K336. D371 is a catalytic residue.

This sequence belongs to the AceK family.

The protein localises to the cytoplasm. It catalyses the reaction L-seryl-[isocitrate dehydrogenase] + ATP = O-phospho-L-seryl-[isocitrate dehydrogenase] + ADP + H(+). In terms of biological role, bifunctional enzyme which can phosphorylate or dephosphorylate isocitrate dehydrogenase (IDH) on a specific serine residue. This is a regulatory mechanism which enables bacteria to bypass the Krebs cycle via the glyoxylate shunt in response to the source of carbon. When bacteria are grown on glucose, IDH is fully active and unphosphorylated, but when grown on acetate or ethanol, the activity of IDH declines drastically concomitant with its phosphorylation. In Yersinia enterocolitica serotype O:8 / biotype 1B (strain NCTC 13174 / 8081), this protein is Isocitrate dehydrogenase kinase/phosphatase.